A 60-amino-acid chain; its full sequence is Large ribosomal subunit protein uL30 (60 aa).

It belongs to the universal ribosomal protein uL30 family. As to quaternary structure, part of the 50S ribosomal subunit.

The sequence is that of Large ribosomal subunit protein uL30 from Bacillus mycoides (strain KBAB4) (Bacillus weihenstephanensis).